The following is a 152-amino-acid chain: Endoribonuclease YbeY (152 aa).

The Zn(2+) site is built by His-113, His-117, and His-123.

This sequence belongs to the endoribonuclease YbeY family. It depends on Zn(2+) as a cofactor.

The protein localises to the cytoplasm. In terms of biological role, single strand-specific metallo-endoribonuclease involved in late-stage 70S ribosome quality control and in maturation of the 3' terminus of the 16S rRNA. The chain is Endoribonuclease YbeY from Janthinobacterium sp. (strain Marseille) (Minibacterium massiliensis).